Here is a 251-residue protein sequence, read N- to C-terminus: HTH-type transcriptional regulator UlaR (251 aa).

The region spanning 3–58 is the HTH deoR-type domain; it reads EAQRHQILLEMLAQLGFVTVEKVVERLGISPATARRDINKLDESGKLKKVRNGAEA. A DNA-binding region (H-T-H motif) is located at residues 20-39; that stretch reads VTVEKVVERLGISPATARRD.

The protein resides in the cytoplasm. In terms of biological role, represses ulaG and the ulaABCDEF operon. The sequence is that of HTH-type transcriptional regulator UlaR from Escherichia coli O139:H28 (strain E24377A / ETEC).